Reading from the N-terminus, the 523-residue chain is NAD(P)H-quinone oxidoreductase subunit 2 (523 aa).

The next 13 membrane-spanning stretches (helical) occupy residues 30–50 (VGPEAAVLVAMIATLLVDLAG), 57–77 (WVPPICYAGLGSALVLLALQW), 94–114 (LAIAFRAVVALSTLLSLLISW), 128–148 (AAILLAATLGGMLLCGATDLV), 182–202 (LLVGSAAAAVFLYGASLLYGL), 223–243 (AALALVFVLATVAFKIAAVPF), 255–275 (PTPVVAFLSVGSKAAGFALAL), 291–311 (LLFTVLAILSMTLGNVVALAQ), 317–337 (MLAYSSIGQAGFVMIGLVCGT), 345–365 (VLYMATYLFMNLGAFACIILF), 389–409 (LGLSLCLLSLGGIPPMLGFFG), 424–444 (VLVVVGLVTSVISIYYYIGVI), and 477–497 (VALVLCVLVTAVGGILSNPLF).

This sequence belongs to the complex I subunit 2 family. As to quaternary structure, NDH-1 can be composed of about 15 different subunits; different subcomplexes with different compositions have been identified which probably have different functions.

It localises to the cellular thylakoid membrane. The catalysed reaction is a plastoquinone + NADH + (n+1) H(+)(in) = a plastoquinol + NAD(+) + n H(+)(out). It catalyses the reaction a plastoquinone + NADPH + (n+1) H(+)(in) = a plastoquinol + NADP(+) + n H(+)(out). In terms of biological role, NDH-1 shuttles electrons from an unknown electron donor, via FMN and iron-sulfur (Fe-S) centers, to quinones in the respiratory and/or the photosynthetic chain. The immediate electron acceptor for the enzyme in this species is believed to be plastoquinone. Couples the redox reaction to proton translocation, and thus conserves the redox energy in a proton gradient. Cyanobacterial NDH-1 also plays a role in inorganic carbon-concentration. This Synechococcus sp. (strain CC9311) protein is NAD(P)H-quinone oxidoreductase subunit 2.